A 743-amino-acid chain; its full sequence is MTILSADTLSITRPYSNSLSTLKVIATPVTESPPSPVASSISPNATNLVEEFINAHKELQSYKSGRPVVLDGHTLSIAAVAAAARYDAGVELDDSPLVKDRLLQSRQVVADKVEQGTSIYGVTTGFGGSADTRTDQPILLGNALMQMQHSGILPSSSKPLDALPLQDPFGLAMPESWVRGAMLIRMNSLIRGHSGVRWELIEKMNDLLRANITPVVPLRGSISASGDLQPLSYVAGALYGNPSIRVFDGERTSALGPRKIVSSVEALEAHSISPISLACKEHLGILNGTAFSASVAALALHDAVHLTLLTQVLTAMGAEALAGTRGNFDPFIHAVARPHPGQIETADVIWNLLEGSKFATTEEEEMTIDEDKGHLRQDRYPLRTSPQFIGPQVEDLIASLATITLECNSTTDNPLVDGETGKVHNGGNFQAMAVTNAMEKTRLSLHHLGKLVFSQCAELINPTMNRGLPPSLAATDPSLNYHAKGIDIASAAYVAELGYLANPVSTHIQSAEMHNQAINSMALVSGRATITSLEVLSLLISSYLYAICQALDLRALQHELYEGLDAIVKEEIIAAFSPFLDDYEITRFTAISCHIVRDAMDSTSTMDAKDRMTSVAASLTTPLVDFLTGEAFSDVVSAGQALTTIPAFRARIAARGYELLDELRRAYLSGGRGLAPASRFLNKTRPVYEFVRLTLGIKMHGAENYNDFENGVGVDDVTTGQNVSLIHEAIRDGKLQPIIVDLF.

Y120 (proton donor/acceptor) is an active-site residue. Residues 224–226 (ASG) constitute a cross-link (5-imidazolinone (Ala-Gly)). Position 225 is a 2,3-didehydroalanine (Ser) (S225). (E)-cinnamate-binding residues include N287, Q377, R383, N413, K484, E512, and N515.

This sequence belongs to the PAL/histidase family. As to quaternary structure, homotetramer. In terms of processing, contains an active site 4-methylidene-imidazol-5-one (MIO), which is formed autocatalytically by cyclization and dehydration of residues Ala-Ser-Gly.

It localises to the cytoplasm. It carries out the reaction L-phenylalanine = (E)-cinnamate + NH4(+). It participates in phenylpropanoid metabolism; trans-cinnamate biosynthesis; trans-cinnamate from L-phenylalanine: step 1/1. Catalyzes the non-oxidative deamination of L-phenylalanine to form trans-cinnamic acid and a free ammonium ion. Facilitates the commitment step in phenylpropanoid pathways that produce secondary metabolites such as lignins, coumarins and flavonoids. This Pleurotus ostreatus (Oyster mushroom) protein is Phenylalanine ammonia-lyase 1.